Consider the following 171-residue polypeptide: NADP-reducing hydrogenase subunit HndA (171 aa).

[2Fe-2S] cluster contacts are provided by Cys-98, Cys-103, Cys-139, and Cys-143.

This sequence belongs to the complex I 24 kDa subunit family. Heterotetramer composed of HndA, HndB, HndC and HndD subunits. HndA and HndB could form a heterodimeric intermediate in the electron transfer between the active site of hydrogenase subunit HndD and the NADP reduction site of the reducing subunit HndC. [2Fe-2S] cluster serves as cofactor.

It catalyses the reaction H2 + NADP(+) = NADPH + H(+). Its activity is regulated as follows. Inhibited by oxygen. In terms of biological role, catalyzes the reduction of NADP in the presence of molecular H(2) to yield NADPH. This is NADP-reducing hydrogenase subunit HndA (hndA) from Solidesulfovibrio fructosivorans (Desulfovibrio fructosivorans).